The primary structure comprises 420 residues: RING finger protein 39 (420 aa).

An RING-type zinc finger spans residues 88–135 (CPLCGGSFEDPVLLACEHSFCRACLARRWGTPPATGTEASPTACPCCG). The B30.2/SPRY domain maps to 210–420 (DDLPEDYPVV…APLRIVPAES (211 aa)).

In terms of tissue distribution, expressed in testis.

The protein resides in the cytoplasm. The enzyme catalyses S-ubiquitinyl-[E2 ubiquitin-conjugating enzyme]-L-cysteine + [acceptor protein]-L-lysine = [E2 ubiquitin-conjugating enzyme]-L-cysteine + N(6)-ubiquitinyl-[acceptor protein]-L-lysine.. Its pathway is protein modification; protein ubiquitination. Functionally, plays an inhibitory role in anti-RNA viral innate immunity by targeting the adapter DDX3X and promoting its 'Lys-48'-linked polyubiquitination. Alternatively, enhances the cGAS-STING pathway activation by promoting 'Lys-63'-linked ubiquitination of STING1, facilitating the STING1-TBK1 complex formation and STING1 activation. (Microbial infection) Plays a positive role in human immunodeficiency virus (HIV-1) replication. The protein is RING finger protein 39 (RNF39) of Homo sapiens (Human).